We begin with the raw amino-acid sequence, 313 residues long: Ribosomal RNA small subunit methyltransferase H (313 aa).

Residues 34–36 (GGH), Asp-53, Phe-80, Asp-101, and Gln-108 each bind S-adenosyl-L-methionine.

It belongs to the methyltransferase superfamily. RsmH family.

The protein localises to the cytoplasm. It carries out the reaction cytidine(1402) in 16S rRNA + S-adenosyl-L-methionine = N(4)-methylcytidine(1402) in 16S rRNA + S-adenosyl-L-homocysteine + H(+). Its function is as follows. Specifically methylates the N4 position of cytidine in position 1402 (C1402) of 16S rRNA. This chain is Ribosomal RNA small subunit methyltransferase H, found in Lacticaseibacillus paracasei (strain ATCC 334 / BCRC 17002 / CCUG 31169 / CIP 107868 / KCTC 3260 / NRRL B-441) (Lactobacillus paracasei).